The primary structure comprises 1004 residues: MSLCEAPVHVGDKELKYFQIPQMLSQLSLLASHHSRGLEFSGGQGESRILRVKVVSGIDLAKKDIFGASDPYVKLSLYVADENRELALVQTKTIKKTLNPKWNEEFYFRVNPSNHRLLFEVFDENRLTRDDFLGQVDVPLSHLPTEDPTMERPYTFKDFLLRPRSHKSRVKGFLRLKMAYMPKNGGQDEENSEQRDDMEHGWEVVDSNDSASQHQEELPPPPLPPGWEEKVDNLGRTYYVNHNNRSTQWHRPSLMDVSSESDNNIRQINQEAAHRRFRSRRHISEDLEPEASEGGGEGPEPWETISEEMNMAGDSLSLALPPPPASPVSRTSPQELSEEVSRRLQITPDSNGEQFSSLIQREPSSRLRSCSVTDTVAEQAHLPPPSTPTRRARSSTVTGGEEPTPSVAYVHTTPGLPSGWEERKDAKGRTYYVNHNNRTTTWTRPIMQLAEDGASGSATNSNNHLVEPQIRRPRSLSSPTVTLSAPLEGAKDSPIRRAVKDTLSNPQSPQPSPYNSPKPQHKVTQSFLPPGWEMRIAPNGRPFFIDHNTKTTTWEDPRLKFPVHMRSKASLNPNDLGPLPPGWEERIHLDGRTFYIDHNSKITQWEDPRLQNPAITGPAVPYSREFKQKYDYFRKKLKKPADIPNRFEMKLHRNNIFEESYRRIMSVKRPDVLKARLWIEFESEKGLDYGGVAREWFFLLSKEMFNPYYGLFEYSATDNYTLQINPNSGLCNEDHLSYFTFIGRVAGLAVFHGKLLDGFFIRPFYKMMLGKQITLNDMESVDSEYYNSLKWILENDPTELDLMFCIDEENFGQTYQVDLKPNGSEIMVTNENKREYIDLVIQWRFVNRVQKQMNAFLEGFTELLPIDLIKIFDENELELLMCGLGDVDVNDWRQHSIYKNGYCPNHPVIQWFWKAVLLMDAEKRIRLLQFVTGTSRVPMNGFAELYGSNGPQLFTIEQWGSPEKLPRAHTCFNRLDLPPYETFEDLREKLLMAVENAQGFEGVD.

The 125-residue stretch at 30 to 154 (LASHHSRGLE…TEDPTMERPY (125 aa)) folds into the C2 domain. Disordered regions lie at residues 207 to 230 (SNDSASQHQEELPPPPLPPGWEEK) and 272 to 407 (AAHR…TPSV). Residues 221 to 254 (PPLPPGWEEKVDNLGRTYYVNHNNRSTQWHRPSL) enclose the WW 1 domain. A Phosphoserine modification is found at serine 341. Threonine 347 bears the Phosphothreonine mark. Polar residues-rich tracts occupy residues 347–359 (TPDSNGEQFSSLI) and 366–376 (RLRSCSVTDTV). A Phosphoserine; by WNK1 and WNK4 modification is found at serine 371. At threonine 396 the chain carries Phosphothreonine; by SGK1. Residues 414–447 (PGLPSGWEERKDAKGRTYYVNHNNRTTTWTRPIM) enclose the WW 2 domain. Residues 453–523 (GASGSATNSN…YNSPKPQHKV (71 aa)) are disordered. At serine 475 the chain carries Phosphoserine. Residue serine 477 is modified to Phosphoserine; by SGK1. 6 positions are modified to phosphoserine: serine 478, serine 493, serine 504, serine 508, serine 512, and serine 516. Residues 489–500 (GAKDSPIRRAVK) show a composition bias toward basic and acidic residues. 2 WW domains span residues 526 to 559 (SFLPPGWEMRIAPNGRPFFIDHNTKTTTWEDPRL) and 577 to 610 (GPLPPGWEERIHLDGRTFYIDHNSKITQWEDPRL). The region spanning 669 to 1003 (RPDVLKARLW…VENAQGFEGV (335 aa)) is the HECT domain. Cysteine 971 serves as the catalytic Glycyl thioester intermediate.

Interacts with UBE2E3. Interacts with NDFIP1; this interaction activates the E3 ubiquitin-protein ligase. Interacts with NDFIP2; this interaction activates the E3 ubiquitin-protein ligase. Interacts (via WW domains) with SCN1A. Interacts (via WW domains) with SCN2A. Interacts (via WW domains) with SCN3A. Interacts (via WW domains) with SCN5A. Interacts (via WW domains) with SCN8A. Interacts (via WW domains) with SCN9A. Interacts (via WW domains) with SCN10A. Interacts (via WW domains) with CLCN5. Interacts with SMAD2. Interacts with SMAD3. Interacts with SMAD6. Interacts with SMAD7. The phosphorylated form interacts with 14-3-3 proteins. Interacts with TNK2. Interacts with WNK1. Interacts with SGK1. Interacts (via C2 domain) with NPC2. Interacts with ARRDC4. Interacts with KCNQ1; promotes internalization of KCNQ1. Interacts (via domains WW1, 3 and 4) with USP36; the interaction inhibits ubiquitination of, at least, NTRK1, KCNQ2 and KCNQ3 by NEDD4L. Interacts with PRRG4 (via cytoplasmic domain). Interacts with LDLRAD3; the interaction is direct. Interacts with UBE2D2. Interacts with TTYH2 and TTYH3. Post-translationally, phosphorylated; which impairs interaction with SCNN. Interaction with YWHAH inhibits dephosphorylation. Aldosterone induces Ser-477 phosphorylation by SGK1. Auto-ubiquitinated. Deubiquitinated by USP36, no effect on NEDD4L protein levels. Both proteins interact and regulate each other's ubiquitination levels. As to expression, highly expressed in liver and kidney. Also expressed in heart, brain and lung. Isoform 1 is expressed in kidney, lung and gut. Isoform 3 is ubiquitously expressed.

Its subcellular location is the cytoplasm. The protein resides in the golgi apparatus. It is found in the endosome. It localises to the multivesicular body. The catalysed reaction is S-ubiquitinyl-[E2 ubiquitin-conjugating enzyme]-L-cysteine + [acceptor protein]-L-lysine = [E2 ubiquitin-conjugating enzyme]-L-cysteine + N(6)-ubiquitinyl-[acceptor protein]-L-lysine.. It catalyses the reaction [E2 ubiquitin-conjugating enzyme]-S-ubiquitinyl-L-cysteine + [acceptor protein]-L-cysteine = [E2 ubiquitin-conjugating enzyme]-L-cysteine + [acceptor protein]-S-ubiquitinyl-L-cysteine.. Its pathway is protein modification; protein ubiquitination. Its activity is regulated as follows. Activated by NDFIP1- and NDFIP2-binding. E3 ubiquitin-protein ligase that mediates the polyubiquitination of lysine and cysteine residues on target proteins and is thereby implicated in the regulation of various signaling pathways including autophagy, innate immunity or DNA repair. Inhibits TGF-beta signaling by triggering SMAD2 and TGFBR1 ubiquitination and proteasome-dependent degradation. Downregulates autophagy and cell growth by ubiquitinating and reducing cellular ULK1 or ASCT2 levels. Promotes ubiquitination and internalization of various plasma membrane channels such as ENaC, SCN2A/Nav1.2, SCN3A/Nav1.3, SCN5A/Nav1.5, SCN9A/Nav1.7, SCN10A/Nav1.8, KCNA3/Kv1.3, KCNH2, EAAT1, KCNQ2/Kv7.2, KCNQ3/Kv7.3 or CLC5. Promotes ubiquitination and degradation of SGK1 and TNK2. Ubiquitinates BRAT1 and this ubiquitination is enhanced in the presence of NDFIP1. Plays a role in dendrite formation by melanocytes. Involved in the regulation of TOR signaling. Ubiquitinates and regulates protein levels of NTRK1 once this one is activated by NGF. Plays a role in antiviral innate immunity by catalyzing 'Lys-29'-linked cysteine ubiquitination of TRAF3, resulting in enhanced 'Lys-48' and 'Lys-63'-linked ubiquitination of TRAF3. Ubiquitinates TTYH2 and TYYH3 and regulates protein levels of TTYH2. The sequence is that of E3 ubiquitin-protein ligase NEDD4-like (Nedd4l) from Mus musculus (Mouse).